The chain runs to 166 residues: Putative 4-hydroxy-4-methyl-2-oxoglutarate aldolase (166 aa).

Residues 74-77 and Arg-96 contribute to the substrate site; that span reads GDQI. Residue Asp-97 participates in a divalent metal cation binding.

The protein belongs to the class II aldolase/RraA-like family. As to quaternary structure, homotrimer. A divalent metal cation serves as cofactor.

The enzyme catalyses 4-hydroxy-4-methyl-2-oxoglutarate = 2 pyruvate. It carries out the reaction oxaloacetate + H(+) = pyruvate + CO2. In terms of biological role, catalyzes the aldol cleavage of 4-hydroxy-4-methyl-2-oxoglutarate (HMG) into 2 molecules of pyruvate. Also contains a secondary oxaloacetate (OAA) decarboxylase activity due to the common pyruvate enolate transition state formed following C-C bond cleavage in the retro-aldol and decarboxylation reactions. In Xanthomonas campestris pv. campestris (strain B100), this protein is Putative 4-hydroxy-4-methyl-2-oxoglutarate aldolase.